We begin with the raw amino-acid sequence, 295 residues long: Sulfotransferase 1E1 (295 aa).

Residue 48-53 (KSGTTW) participates in 3'-phosphoadenylyl sulfate binding. A substrate-binding site is contributed by 106 to 108 (KSH). H108 functions as the Proton acceptor in the catalytic mechanism. 3'-phosphoadenylyl sulfate-binding residues include R130, S138, and Y193. A phosphoserine; by PKA mark is found at S216 and S228. 3'-phosphoadenylyl sulfate is bound by residues 227-232 (TSFQEM) and 257-259 (RKG).

This sequence belongs to the sulfotransferase 1 family. As to quaternary structure, homodimer.

The protein resides in the cytoplasm. It localises to the cytosol. It catalyses the reaction estrone + 3'-phosphoadenylyl sulfate = estrone 3-sulfate + adenosine 3',5'-bisphosphate + H(+). The catalysed reaction is (24S)-hydroxycholesterol + 3'-phosphoadenylyl sulfate = (24S)-hydroxycholesterol 3-sulfate + adenosine 3',5'-bisphosphate + H(+). The enzyme catalyses 17beta-estradiol + 3'-phosphoadenylyl sulfate = 17beta-estradiol 3-sulfate + adenosine 3',5'-bisphosphate + H(+). It carries out the reaction 3beta-hydroxyandrost-5-en-17-one + 3'-phosphoadenylyl sulfate = dehydroepiandrosterone 3-sulfate + adenosine 3',5'-bisphosphate + H(+). It catalyses the reaction 4-ethylphenol + 3'-phosphoadenylyl sulfate = 4-ethylphenyl sulfate + adenosine 3',5'-bisphosphate + H(+). Inhibited by estradiol. Functionally, sulfotransferase that utilizes 3'-phospho-5'-adenylyl sulfate (PAPS) as sulfonate donor to catalyze the sulfate conjugation of estradiol and estrone. Is a key enzyme in estrogen homeostasis, the sulfation of estrogens leads to their inactivation. Also sulfates dehydroepiandrosterone (DHEA), pregnenolone, (24S)-hydroxycholesterol and xenobiotic compounds like ethinylestradiol, equalenin, diethyl stilbesterol and 1-naphthol at significantly lower efficiency. Does not sulfonate cortisol, testosterone and dopamine. May play a role in gut microbiota-host metabolic interaction. O-sulfonates 4-ethylphenol (4-EP), a dietary tyrosine-derived metabolite produced by gut bacteria. The product 4-EPS crosses the blood-brain barrier and may negatively regulate oligodendrocyte maturation and myelination, affecting the functional connectivity of different brain regions associated with the limbic system. The polypeptide is Sulfotransferase 1E1 (SULT1E1) (Bos taurus (Bovine)).